We begin with the raw amino-acid sequence, 393 residues long: S-adenosylmethionine synthase (393 aa).

An ATP-binding site is contributed by His-17. Asp-19 contacts Mg(2+). K(+) is bound at residue Glu-45. 2 residues coordinate L-methionine: Glu-58 and Gln-106. The tract at residues Gln-106–Ala-116 is flexible loop. Residues Asp-171–Lys-173, Asp-246, Arg-252–Lys-253, Ala-269, and Lys-273 each bind ATP. Residue Asp-246 participates in L-methionine binding. Lys-277 is an L-methionine binding site.

This sequence belongs to the AdoMet synthase family. Homotetramer; dimer of dimers. It depends on Mg(2+) as a cofactor. K(+) is required as a cofactor.

It is found in the cytoplasm. It catalyses the reaction L-methionine + ATP + H2O = S-adenosyl-L-methionine + phosphate + diphosphate. It participates in amino-acid biosynthesis; S-adenosyl-L-methionine biosynthesis; S-adenosyl-L-methionine from L-methionine: step 1/1. Its function is as follows. Catalyzes the formation of S-adenosylmethionine (AdoMet) from methionine and ATP. The overall synthetic reaction is composed of two sequential steps, AdoMet formation and the subsequent tripolyphosphate hydrolysis which occurs prior to release of AdoMet from the enzyme. In Roseobacter denitrificans (strain ATCC 33942 / OCh 114) (Erythrobacter sp. (strain OCh 114)), this protein is S-adenosylmethionine synthase.